The primary structure comprises 359 residues: Transcription factor MYB115 (359 aa).

The segment covering 1-17 (MYHQNLISSTPNQNSNP) has biased composition (polar residues). The interval 1 to 21 (MYHQNLISSTPNQNSNPHDWD) is disordered. HTH myb-type domains lie at 153 to 208 (KDII…RPNI) and 209 to 259 (KKND…RRLH). 2 consecutive DNA-binding regions (H-T-H motif) follow at residues 181-204 (WTSI…HNHL) and 232-255 (WTEI…NATK).

As to expression, accumulates in reproductive organs (e.g. flowers and siliques). Expressed at very low levels in vegetative organs.

The protein localises to the nucleus. Transcription activator that recognizes the motif 5'-TAACGG-3' in the promoter of target genes. Promotes vegetative-to-embryonic transition and the formation of somatic embryos from root explants in a WUS-independent manner. Together with MYB118, activates the transcription of S-ACP-DES2/AAD2 and S-ACP-DES3/AAD3 thus promoting the biosynthesis of omega-7 monounsaturated fatty acid in seed endosperm. This is Transcription factor MYB115 from Arabidopsis thaliana (Mouse-ear cress).